A 327-amino-acid polypeptide reads, in one-letter code: Undecaprenyl-phosphate 4-deoxy-4-formamido-L-arabinose transferase (327 aa).

Helical transmembrane passes span 233–253 (ILSLIGSVVALSGFLLALLLI) and 268–288 (VFTLFAVLFMFIGAQFVGMGL).

It belongs to the glycosyltransferase 2 family.

The protein resides in the cell inner membrane. The enzyme catalyses UDP-4-deoxy-4-formamido-beta-L-arabinose + di-trans,octa-cis-undecaprenyl phosphate = 4-deoxy-4-formamido-alpha-L-arabinopyranosyl di-trans,octa-cis-undecaprenyl phosphate + UDP. Its pathway is glycolipid biosynthesis; 4-amino-4-deoxy-alpha-L-arabinose undecaprenyl phosphate biosynthesis; 4-amino-4-deoxy-alpha-L-arabinose undecaprenyl phosphate from UDP-4-deoxy-4-formamido-beta-L-arabinose and undecaprenyl phosphate: step 1/2. The protein operates within bacterial outer membrane biogenesis; lipopolysaccharide biosynthesis. In terms of biological role, catalyzes the transfer of 4-deoxy-4-formamido-L-arabinose from UDP to undecaprenyl phosphate. The modified arabinose is attached to lipid A and is required for resistance to polymyxin and cationic antimicrobial peptides. This Pectobacterium atrosepticum (strain SCRI 1043 / ATCC BAA-672) (Erwinia carotovora subsp. atroseptica) protein is Undecaprenyl-phosphate 4-deoxy-4-formamido-L-arabinose transferase.